The sequence spans 498 residues: ATP synthase subunit beta, chloroplastic (498 aa).

172–179 is an ATP binding site; the sequence is GGAGVGKT.

This sequence belongs to the ATPase alpha/beta chains family. F-type ATPases have 2 components, CF(1) - the catalytic core - and CF(0) - the membrane proton channel. CF(1) has five subunits: alpha(3), beta(3), gamma(1), delta(1), epsilon(1). CF(0) has four main subunits: a(1), b(1), b'(1) and c(9-12).

It localises to the plastid. The protein resides in the chloroplast thylakoid membrane. It catalyses the reaction ATP + H2O + 4 H(+)(in) = ADP + phosphate + 5 H(+)(out). In terms of biological role, produces ATP from ADP in the presence of a proton gradient across the membrane. The catalytic sites are hosted primarily by the beta subunits. The polypeptide is ATP synthase subunit beta, chloroplastic (Nandina domestica (Heavenly bamboo)).